The chain runs to 23 residues: Basic phospholipase A2 mangshantoxin (23 aa).

The protein belongs to the phospholipase A2 family. Group II subfamily. Requires Ca(2+) as cofactor. In terms of processing, contains 7 disulfide bonds. In terms of tissue distribution, expressed by the venom gland.

The protein resides in the secreted. It carries out the reaction a 1,2-diacyl-sn-glycero-3-phosphocholine + H2O = a 1-acyl-sn-glycero-3-phosphocholine + a fatty acid + H(+). Snake venom phospholipase A2 (PLA2) that displays presynaptic neurotoxicity. PLA2 catalyzes the calcium-dependent hydrolysis of the 2-acyl groups in 3-sn-phosphoglycerides. This is Basic phospholipase A2 mangshantoxin from Protobothrops mangshanensis (Mangshan pitviper).